The following is a 423-amino-acid chain: Endoplasmic reticulum junction formation protein lunapark (423 aa).

The Cytoplasmic portion of the chain corresponds to 1–45 (MGALLAKWRAKPSTVEVLEKMEKDIQSLEEFRDKNQKLRKIWVAR). The stretch at 16-40 (EVLEKMEKDIQSLEEFRDKNQKLRK) forms a coiled coil. Residues 46-66 (LFFYSTILYILTSLTVYLWYL) traverse the membrane as a helical segment. Residues 67–77 (PDGMTARLLTM) are Lumenal-facing. Residues 78–98 (LLFLSFPVLIWFVRTLLILWF) form a helical membrane-spanning segment. Residues 99-423 (SRRTERNNDA…ETEESFMETE (325 aa)) lie on the Cytoplasmic side of the membrane. A coiled-coil region spans residues 101–128 (RTERNNDALELLKTEKKKILEEVMEKET). The disordered stretch occupies residues 147–169 (KELELPVPGPPITPRPGQDLRQR). At T159 the chain carries Phosphothreonine. Phosphoserine occurs at positions 177, 179, and 188. At T198 the chain carries Phosphothreonine. The disordered stretch occupies residues 200–247 (SLQRDTSAPGGPPERSVQPTPQSNILQRRPGSPATTVSGMAIHPPGPP). A phosphoserine mark is found at S206 and S215. Residues 216-225 (VQPTPQSNIL) are compositionally biased toward polar residues. Phosphothreonine is present on T219. Phosphoserine occurs at positions 222 and 231. The segment at 280 to 305 (CQQCFSHNGMALKEEFEYVAFRCAYC) adopts a C4-type; plays a role in ER morphology zinc-finger fold. Residues 318–423 (APRLQEINFD…ETEESFMETE (106 aa)) are disordered. Positions 334–343 (DSQGSVSSVQ) are enriched in polar residues. Composition is skewed to acidic residues over residues 370–391 (QAIE…DDSE) and 414–423 (ETEESFMETE).

Belongs to the lunapark family. Homodimer; homodimerization requires the C4-type zinc finger motif and decreases during mitosis in a phosphorylation-dependent manner. Post-translationally, phosphorylated. Phosphorylation at Thr-159 occurs during interphase. Phosphorylation at Ser-177, Ser-179, Ser-188, Thr-198, Ser-206, Ser-215, Thr-219, Ser-222 and Ser-231 occurs during mitosis; these phosphorylations reduce both its homodimerization and the ER three-way tubular junction formation.

Its subcellular location is the endoplasmic reticulum membrane. Endoplasmic reticulum (ER)-shaping membrane protein that plays a role in determining ER morphology. Involved in the stabilization of nascent three-way ER tubular junctions within the ER network. May also play a role as a curvature-stabilizing protein within three-way ER tubular junction network. This Xenopus tropicalis (Western clawed frog) protein is Endoplasmic reticulum junction formation protein lunapark (lnpk).